A 382-amino-acid chain; its full sequence is MSQSNNVTDLARANIRALTPYMSARRLGGNGDVWLNANEYPLGTEYQLTTQTFNRYPECQPKHVIERYAAYAGLPPEQVLVSRGADEGIELLIRAFCEPGQDAILFCPPTYGMYAVSAETFGVERRTVPAQADWQLDLPAIANNLEQVKVIYVCSPNNPTGNLINPADLQAVLALAQGRAIVAIDEAYIEFCPQASVSNWLKDYPNLVILRTLSKAFALAGLRCGFTLANSDIIQLLLKVIAPYPLSTPVADIAAQALSPKGIEQMRQRVSEVRANRAWLQSALQDCACVEQVFTSESNYLLARFTASSSVFNALWDQGIILRDQNKQPGLANCLRITIGTRQECERVIAALAPLPGIDNSNNIDNQNKTYSQTSSIRKGTI.

At lysine 215 the chain carries N6-(pyridoxal phosphate)lysine. The tract at residues 363 to 382 (NIDNQNKTYSQTSSIRKGTI) is disordered.

The protein belongs to the class-II pyridoxal-phosphate-dependent aminotransferase family. Histidinol-phosphate aminotransferase subfamily. Homodimer. Requires pyridoxal 5'-phosphate as cofactor.

The catalysed reaction is L-histidinol phosphate + 2-oxoglutarate = 3-(imidazol-4-yl)-2-oxopropyl phosphate + L-glutamate. Its pathway is amino-acid biosynthesis; L-histidine biosynthesis; L-histidine from 5-phospho-alpha-D-ribose 1-diphosphate: step 7/9. The protein is Histidinol-phosphate aminotransferase of Yersinia pestis bv. Antiqua (strain Antiqua).